A 514-amino-acid polypeptide reads, in one-letter code: 3-octaprenyl-4-hydroxybenzoate carboxy-lyase (514 aa).

Asparagine 177 contributes to the Mn(2+) binding site. Residues 180–182, 194–196, and 199–200 contribute to the prenylated FMN site; these read IYR, RWL, and RG. Glutamate 243 lines the Mn(2+) pocket. Residue aspartate 314 is the Proton donor of the active site.

Belongs to the UbiD family. As to quaternary structure, homohexamer. Prenylated FMN is required as a cofactor. The cofactor is Mn(2+).

It localises to the cell membrane. The catalysed reaction is a 4-hydroxy-3-(all-trans-polyprenyl)benzoate + H(+) = a 2-(all-trans-polyprenyl)phenol + CO2. It functions in the pathway cofactor biosynthesis; ubiquinone biosynthesis. In terms of biological role, catalyzes the decarboxylation of 3-octaprenyl-4-hydroxy benzoate to 2-octaprenylphenol, an intermediate step in ubiquinone biosynthesis. This Bordetella petrii (strain ATCC BAA-461 / DSM 12804 / CCUG 43448) protein is 3-octaprenyl-4-hydroxybenzoate carboxy-lyase.